The following is a 207-amino-acid chain: Large ribosomal subunit protein uL3 (207 aa).

The tract at residues G126–G149 is disordered.

Belongs to the universal ribosomal protein uL3 family. In terms of assembly, part of the 50S ribosomal subunit. Forms a cluster with proteins L14 and L19.

In terms of biological role, one of the primary rRNA binding proteins, it binds directly near the 3'-end of the 23S rRNA, where it nucleates assembly of the 50S subunit. This chain is Large ribosomal subunit protein uL3, found in Deinococcus geothermalis (strain DSM 11300 / CIP 105573 / AG-3a).